The primary structure comprises 420 residues: MPEGNGTVALAFSGGLDTTVCVSLLKEEYGYDEVIGVTVDVGQPDYEFEEAEETAEALGVEQHVVDATEEFADLCMEAVKANADYQGYPLGTALARPVIAKAILSVAEDEGCSAVAHGCTGKGNDQLRFESVWRDSDLDVIAPVRELGLTREWENEYAAEKGLPVEGGDGGRYSIDTNLWSRSIEGSELEDPSTIPADDIYKWTDNPSDKDAELVEVEFEDGVPVAVDGEELGGVELIEQLNKQAGAHGIGRTDMMEDRMLGLKVRENYEHPAATVLLTAHEALEGLVLTQEERQFKAQVDQEWSQKAYQGLVDAPLTGALEAFIDDTNERVTGTVTVKLEGGHCRPVSRESDYAVYSESAASFNEEDVSGGITQQDATGVAKYHGFQSRLANKILDDAKKGAAVTDGSGDHAASEDTEE.

11 to 19 contributes to the ATP binding site; it reads AFSGGLDTT. An L-citrulline-binding site is contributed by Tyr-88. Gly-118 serves as a coordination point for ATP. Residues Thr-120, Asn-124, and Asp-125 each contribute to the L-aspartate site. L-citrulline is bound at residue Asn-124. Residues Arg-128, Ser-174, Ser-183, Glu-257, and Tyr-269 each coordinate L-citrulline. A disordered region spans residues 401 to 420; sequence KGAAVTDGSGDHAASEDTEE. Over residues 409 to 420 the composition is skewed to basic and acidic residues; it reads SGDHAASEDTEE.

The protein belongs to the argininosuccinate synthase family. Type 1 subfamily. In terms of assembly, homotetramer.

It localises to the cytoplasm. It carries out the reaction L-citrulline + L-aspartate + ATP = 2-(N(omega)-L-arginino)succinate + AMP + diphosphate + H(+). It participates in amino-acid biosynthesis; L-arginine biosynthesis; L-arginine from L-ornithine and carbamoyl phosphate: step 2/3. The chain is Argininosuccinate synthase from Haloarcula marismortui (strain ATCC 43049 / DSM 3752 / JCM 8966 / VKM B-1809) (Halobacterium marismortui).